A 167-amino-acid chain; its full sequence is Small ribosomal subunit protein uS5 (167 aa).

The S5 DRBM domain maps to 11–74; it reads LQEKLIAVNR…EKARRAMINV (64 aa).

It belongs to the universal ribosomal protein uS5 family. As to quaternary structure, part of the 30S ribosomal subunit. Contacts proteins S4 and S8.

Its function is as follows. With S4 and S12 plays an important role in translational accuracy. In terms of biological role, located at the back of the 30S subunit body where it stabilizes the conformation of the head with respect to the body. In Yersinia pseudotuberculosis serotype O:1b (strain IP 31758), this protein is Small ribosomal subunit protein uS5.